A 539-amino-acid chain; its full sequence is Phosphoenolpyruvate carboxykinase (ATP) (539 aa).

Substrate contacts are provided by Arg-61, Tyr-195, and Lys-201. ATP contacts are provided by residues Lys-201, His-220, and 238–246 (GLSGTGKTT). Lys-201 and His-220 together coordinate Mn(2+). Asp-259 is a binding site for Mn(2+). Residues Glu-287, Arg-325, and Thr-450 each coordinate ATP. Arg-325 lines the substrate pocket.

The protein belongs to the phosphoenolpyruvate carboxykinase (ATP) family. Mn(2+) serves as cofactor.

It localises to the cytoplasm. The enzyme catalyses oxaloacetate + ATP = phosphoenolpyruvate + ADP + CO2. It functions in the pathway carbohydrate biosynthesis; gluconeogenesis. Functionally, involved in the gluconeogenesis. Catalyzes the conversion of oxaloacetate (OAA) to phosphoenolpyruvate (PEP) through direct phosphoryl transfer between the nucleoside triphosphate and OAA. The protein is Phosphoenolpyruvate carboxykinase (ATP) of Methylorubrum extorquens (strain CM4 / NCIMB 13688) (Methylobacterium extorquens).